Here is a 470-residue protein sequence, read N- to C-terminus: 1-aminocyclopropane-1-carboxylate synthase 9 (470 aa).

Substrate is bound by residues Glu-47 and Tyr-85. Position 272 is an N6-(pyridoxal phosphate)lysine (Lys-272).

This sequence belongs to the class-I pyridoxal-phosphate-dependent aminotransferase family. In terms of assembly, homodimer and heterodimer. In vivo, the relevance of heterodimerization with other ACS enzymes is however unsure. Interacts (via its C-terminal region) with FEI1, FEI2, ETO1 and EOL1. It depends on pyridoxal 5'-phosphate as a cofactor. May be processed at its C-terminus. As to expression, expressed in roots and siliques.

The enzyme catalyses S-adenosyl-L-methionine = 1-aminocyclopropane-1-carboxylate + S-methyl-5'-thioadenosine + H(+). The protein operates within alkene biosynthesis; ethylene biosynthesis via S-adenosyl-L-methionine; ethylene from S-adenosyl-L-methionine: step 1/2. In terms of biological role, 1-aminocyclopropane-1-carboxylate synthase (ACS) enzymes catalyze the conversion of S-adenosyl-L-methionine (SAM) into 1-aminocyclopropane-1-carboxylate (ACC), a direct precursor of ethylene. The sequence is that of 1-aminocyclopropane-1-carboxylate synthase 9 (ACS9) from Arabidopsis thaliana (Mouse-ear cress).